The sequence spans 312 residues: Methionyl-tRNA formyltransferase (312 aa).

Serine 109 to proline 112 is a (6S)-5,6,7,8-tetrahydrofolate binding site.

Belongs to the Fmt family.

The catalysed reaction is L-methionyl-tRNA(fMet) + (6R)-10-formyltetrahydrofolate = N-formyl-L-methionyl-tRNA(fMet) + (6S)-5,6,7,8-tetrahydrofolate + H(+). Functionally, attaches a formyl group to the free amino group of methionyl-tRNA(fMet). The formyl group appears to play a dual role in the initiator identity of N-formylmethionyl-tRNA by promoting its recognition by IF2 and preventing the misappropriation of this tRNA by the elongation apparatus. This Dictyoglomus thermophilum (strain ATCC 35947 / DSM 3960 / H-6-12) protein is Methionyl-tRNA formyltransferase.